A 1069-amino-acid polypeptide reads, in one-letter code: Calcium-transporting ATPase 10, plasma membrane-type (1069 aa).

Positions 1-29 (MSGQFNNSPRGEDKDVEAGTSSFTEYEDS) are disordered. An N-acetylserine modification is found at S2. The Cytoplasmic segment spans residues 2–180 (SGQFNNSPRG…NTYPQKKGRS (179 aa)). Positions 42 to 53 (ERLRRWRQAALV) are interaction with calmodulin. The chain crosses the membrane as a helical span at residues 181–201 (FWRFVWEASQDLTLIILIVAA). Residues 202 to 219 (VASLALGIKTEGIEKGWY) lie on the Lumenal side of the membrane. Residues 220–240 (DGISIAFAVLLVIVVTATSDY) traverse the membrane as a helical segment. Over 241–369 (RQSLQFQNLN…GGETPLQVRL (129 aa)) the chain is Cytoplasmic. A helical transmembrane segment spans residues 370–389 (NGVATFIGIVGLTVAGVVLF). The Lumenal portion of the chain corresponds to 390-426 (VLVVRYFTGHTKNEQGGPQFIGGKTKFEHVLDDLVEI). A helical transmembrane segment spans residues 427–444 (FTVAVTIVVVAVPEGLPL). Over 445–844 (AVTLTLAYSM…RWGRSVYANI (400 aa)) the chain is Cytoplasmic. The active-site 4-aspartylphosphate intermediate is D482. Residues D789 and D793 each contribute to the Mg(2+) site. Residues 845–863 (QKFIQFQLTVNVAALVINV) traverse the membrane as a helical segment. The Lumenal segment spans residues 864–874 (VAAISAGEVPL). The chain crosses the membrane as a helical span at residues 875 to 895 (TAVQLLWVNLIMDTLGALALA). Residues 896 to 915 (TEPPTDHLMDRAPVGRREPL) lie on the Cytoplasmic side of the membrane. Residues 916 to 938 (ITNIMWRNLFIQAMYQVTVLLIL) traverse the membrane as a helical segment. The Lumenal segment spans residues 939 to 951 (NFRGISILHLKSK). A helical membrane pass occupies residues 952–973 (PNAERVKNTVIFNAFVICQVFN). At 974 to 991 (EFNARKPDEINIFRGVLR) the chain is on the cytoplasmic side. Residues 992 to 1013 (NHLFVGIISITIVLQVVIVEFL) form a helical membrane-spanning segment. Topologically, residues 1014–1023 (GTFASTTKLD) are lumenal. The chain crosses the membrane as a helical span at residues 1024–1045 (WEMWLVCIGIGSISWPLAVIGK). Residues 1046-1069 (LIPVPETPVSQYFRINRWRRNSSG) are Cytoplasmic-facing.

This sequence belongs to the cation transport ATPase (P-type) (TC 3.A.3) family. Type IIB subfamily.

The protein localises to the membrane. The enzyme catalyses Ca(2+)(in) + ATP + H2O = Ca(2+)(out) + ADP + phosphate + H(+). Activated by calmodulin. Its function is as follows. This magnesium-dependent enzyme catalyzes the hydrolysis of ATP coupled with the translocation of calcium from the cytosol into the endoplasmic reticulum. This is Calcium-transporting ATPase 10, plasma membrane-type (ACA10) from Arabidopsis thaliana (Mouse-ear cress).